The sequence spans 513 residues: Cytochrome P450 86A1 (513 aa).

The helical transmembrane segment at 7–27 threads the bilayer; the sequence is ILTGYAVAALSVYALWFYFLS. C456 is a heme binding site.

This sequence belongs to the cytochrome P450 family. The cofactor is heme. In terms of tissue distribution, expressed in roots.

The protein resides in the membrane. It catalyses the reaction an omega-methyl-long-chain fatty acid + reduced [NADPH--hemoprotein reductase] + O2 = an omega-hydroxy-long-chain fatty acid + oxidized [NADPH--hemoprotein reductase] + H2O + H(+). In terms of biological role, catalyzes the omega-hydroxylation of various fatty acids (FA). Acts on saturated and unsaturated fatty acids with chain lengths from C12 to C18 but not on hexadecane. This is Cytochrome P450 86A1 (CYP86A1) from Arabidopsis thaliana (Mouse-ear cress).